The following is a 23-amino-acid chain: Cytochrome c oxidase subunit 7A1, mitochondrial (23 aa).

Belongs to the cytochrome c oxidase VIIa family. In terms of assembly, component of the complex IV (CIV, cytochrome c oxidase), a multisubunit enzyme composed of 14 subunits. The complex is composed of a catalytic core of 3 subunits MT-CO1, MT-CO2 and MT-CO3, encoded in the mitochondrial DNA, and 11 supernumerary subunits COX4I1 (or COX4I2), COX5A, COX5B, COX6A2 (or COX6A1), COX6B1 (or COX6B2), COX6C, COX7A1 (or COX7A2), COX7B, COX7C, COX8B and NDUFA4, which are encoded in the nuclear genome. The complex exists as a monomer or a dimer and forms supercomplexes (SCs) in the inner mitochondrial membrane with NADH-ubiquinone oxidoreductase (complex I, CI) and ubiquinol-cytochrome c oxidoreductase (cytochrome b-c1 complex, complex III, CIII), resulting in different assemblies (supercomplex SCI(1)III(2)IV(1) and megacomplex MCI(2)III(2)IV(2)).

It localises to the mitochondrion inner membrane. It functions in the pathway energy metabolism; oxidative phosphorylation. Component of the mitochondrial respiratory complex IV (CIV, also named cytochrome c oxidase complex), the last enzyme in the mitochondrial electron transport chain which drives oxidative phosphorylation. The CIV complex is the component of the respiratory chain that catalyzes the reduction of oxygen to water. Acts as an assembly factor that specifically drives the homodimerization of CIV complexes, mediating the formation of mitochondrial respiratory supercomplexes (respirasomes) containing two CIV: supercomplxes with two molecules of CIV show improved activity. Despite being highly expressed in brown adipose tissue, not required for thermogenesis. This is Cytochrome c oxidase subunit 7A1, mitochondrial (COX7A1) from Canis lupus familiaris (Dog).